The sequence spans 399 residues: uncharacterized protein (399 aa).

A run of 5 helical transmembrane segments spans residues 26–46 (LLTI…ISLG), 266–286 (VITI…AVGI), 301–321 (IGIL…FVVE), 324–344 (FLGL…AEVI), and 358–378 (AWIS…VGVI).

Belongs to the ABC-4 integral membrane protein family.

The protein localises to the cell membrane. This is an uncharacterized protein from Methanocaldococcus jannaschii (strain ATCC 43067 / DSM 2661 / JAL-1 / JCM 10045 / NBRC 100440) (Methanococcus jannaschii).